An 81-amino-acid chain; its full sequence is MNPLISAASVIAAGLAVGLASIGPGVGQGTAAGQAVEGIARQPEAEGKIRGTLLLSLAFMEALTIYGLVVALALSFANPFV.

2 consecutive transmembrane segments (helical) span residues 3–23 (PLIS…ASIG) and 53–73 (LLLS…VALA).

Belongs to the ATPase C chain family. F-type ATPases have 2 components, F(1) - the catalytic core - and F(0) - the membrane proton channel. F(1) has five subunits: alpha(3), beta(3), gamma(1), delta(1), epsilon(1). F(0) has four main subunits: a(1), b(1), b'(1) and c(10-14). The alpha and beta chains form an alternating ring which encloses part of the gamma chain. F(1) is attached to F(0) by a central stalk formed by the gamma and epsilon chains, while a peripheral stalk is formed by the delta, b and b' chains.

It localises to the plastid. The protein resides in the chloroplast thylakoid membrane. Functionally, f(1)F(0) ATP synthase produces ATP from ADP in the presence of a proton or sodium gradient. F-type ATPases consist of two structural domains, F(1) containing the extramembraneous catalytic core and F(0) containing the membrane proton channel, linked together by a central stalk and a peripheral stalk. During catalysis, ATP synthesis in the catalytic domain of F(1) is coupled via a rotary mechanism of the central stalk subunits to proton translocation. Its function is as follows. Key component of the F(0) channel; it plays a direct role in translocation across the membrane. A homomeric c-ring of between 10-14 subunits forms the central stalk rotor element with the F(1) delta and epsilon subunits. This is ATP synthase subunit c, chloroplastic from Angiopteris evecta (Mule's foot fern).